A 218-amino-acid polypeptide reads, in one-letter code: Large ribosomal subunit protein uL3 (218 aa).

This sequence belongs to the universal ribosomal protein uL3 family. In terms of assembly, part of the 50S ribosomal subunit. Forms a cluster with proteins L14 and L19.

Its function is as follows. One of the primary rRNA binding proteins, it binds directly near the 3'-end of the 23S rRNA, where it nucleates assembly of the 50S subunit. This is Large ribosomal subunit protein uL3 from Corynebacterium efficiens (strain DSM 44549 / YS-314 / AJ 12310 / JCM 11189 / NBRC 100395).